A 633-amino-acid polypeptide reads, in one-letter code: Chaperone protein HtpG (633 aa).

Positions 1 to 341 (MTAPHETMSF…SADLPLNVSR (341 aa)) are a; substrate-binding. The tract at residues 342–562 (ELLQESRDVK…EGDMSGYLQR (221 aa)) is b. Residues 563–633 (LLKQAGQKAP…YVQRVNKLLA (71 aa)) form a c region.

It belongs to the heat shock protein 90 family. As to quaternary structure, homodimer.

It is found in the cytoplasm. In terms of biological role, molecular chaperone. Has ATPase activity. This Cupriavidus necator (strain ATCC 17699 / DSM 428 / KCTC 22496 / NCIMB 10442 / H16 / Stanier 337) (Ralstonia eutropha) protein is Chaperone protein HtpG.